A 138-amino-acid polypeptide reads, in one-letter code: Ribulose bisphosphate carboxylase small subunit (138 aa).

The protein belongs to the RuBisCO small chain family. As to quaternary structure, heterohexadecamer of 8 large and 8 small subunits.

The protein localises to the plastid. Its subcellular location is the chloroplast. In terms of biological role, ruBisCO catalyzes two reactions: the carboxylation of D-ribulose 1,5-bisphosphate, the primary event in carbon dioxide fixation, as well as the oxidative fragmentation of the pentose substrate in the photorespiration process. Both reactions occur simultaneously and in competition at the same active site. Although the small subunit is not catalytic it is essential for maximal activity. The sequence is that of Ribulose bisphosphate carboxylase small subunit from Pyropia yezoensis (Susabi-nori).